The following is a 143-amino-acid chain: MAAAAEGVPATRREEQPPRDDAAVETAEEAKEPAEADINELCRDMFSKMATYLTGELTATSEDYKLLENMNKLTSLKYLEMKDIAINISRNLKDLNQKYAELQPYLDQINMIEEQVAALEQAAYKLDAYSKKLEAKYKKLEKR.

The tract at residues 1–36 is disordered; it reads MAAAAEGVPATRREEQPPRDDAAVETAEEAKEPAEA. Residue A2 is modified to N-acetylalanine. Residues 11-36 show a composition bias toward basic and acidic residues; it reads TRREEQPPRDDAAVETAEEAKEPAEA. Positions 80–128 form a coiled coil; sequence EMKDIAINISRNLKDLNQKYAELQPYLDQINMIEEQVAALEQAAYKLDA.

Belongs to the BLOC1S2 family. In terms of assembly, component of the biogenesis of lysosome-related organelles complex 1 (BLOC-1) composed of BLOC1S1, BLOC1S2, BLOC1S3, BLOC1S4, BLOC1S5, BLOC1S6, DTNBP1/BLOC1S7 and SNAPIN/BLOC1S8. Octamer composed of one copy each BLOC1S1, BLOC1S2, BLOC1S3, BLOC1S4, BLOC1S5, BLOC1S6, DTNBP1/BLOC1S7 and SNAPIN/BLOC1S8. Interacts directly with BLOC1S1, BLOC1S3, BLOC1S4, BLOC1S5 and SNAPIN. The BLOC-1 complex associates with the AP-3 protein complex and membrane protein cargos. Component of the BLOC-one-related complex (BORC) which is composed of BLOC1S1, BLOC1S2, BORCS5, BORCS6, BORCS7, BORCS8, KXD1 and SNAPIN. Interacts with gamma-tubulin. Interacts with IFT57.

Its subcellular location is the cytoplasm. It localises to the cytoskeleton. It is found in the microtubule organizing center. The protein localises to the centrosome. The protein resides in the lysosome membrane. Functionally, component of the BLOC-1 complex, a complex that is required for normal biogenesis of lysosome-related organelles (LRO), such as platelet dense granules and melanosomes. In concert with the AP-3 complex, the BLOC-1 complex is required to target membrane protein cargos into vesicles assembled at cell bodies for delivery into neurites and nerve terminals. The BLOC-1 complex, in association with SNARE proteins, is also proposed to be involved in neurite extension. As part of the BORC complex may play a role in lysosomes movement and localization at the cell periphery. Associated with the cytosolic face of lysosomes, the BORC complex may recruit ARL8B and couple lysosomes to microtubule plus-end-directed kinesin motor. This chain is Biogenesis of lysosome-related organelles complex 1 subunit 2 (Bloc1s2), found in Mus musculus (Mouse).